The primary structure comprises 171 residues: Sorcin (171 aa).

EF-hand domains lie at 3–38 (MDTNSLRHIFSRVDADKSGSISANELQTSLSNGLGT), 40–69 (LNIRTVQLMVAMFDRDMNGTINFNEFLGLF), 70–105 (KYVQDWQTCFRRYDRDNSGSIDLNEFSNALISFGYH), and 106–140 (LSPQFVNLMMRRFDRNRGSIAFDDFIYACVCLQTL). 15 residues coordinate Ca(2+): aspartate 16, aspartate 18, serine 20, serine 22, glutamate 27, aspartate 53, aspartate 55, asparagine 57, threonine 59, glutamate 64, aspartate 83, aspartate 85, serine 87, serine 89, and glutamate 94.

The protein resides in the cytoplasm. Its function is as follows. Calcium-binding protein. The chain is Sorcin from Schistosoma japonicum (Blood fluke).